A 219-amino-acid polypeptide reads, in one-letter code: ATP phosphoribosyltransferase (219 aa).

It belongs to the ATP phosphoribosyltransferase family. Short subfamily. As to quaternary structure, heteromultimer composed of HisG and HisZ subunits.

Its subcellular location is the cytoplasm. The enzyme catalyses 1-(5-phospho-beta-D-ribosyl)-ATP + diphosphate = 5-phospho-alpha-D-ribose 1-diphosphate + ATP. The protein operates within amino-acid biosynthesis; L-histidine biosynthesis; L-histidine from 5-phospho-alpha-D-ribose 1-diphosphate: step 1/9. In terms of biological role, catalyzes the condensation of ATP and 5-phosphoribose 1-diphosphate to form N'-(5'-phosphoribosyl)-ATP (PR-ATP). Has a crucial role in the pathway because the rate of histidine biosynthesis seems to be controlled primarily by regulation of HisG enzymatic activity. The sequence is that of ATP phosphoribosyltransferase from Syntrophotalea carbinolica (strain DSM 2380 / NBRC 103641 / GraBd1) (Pelobacter carbinolicus).